We begin with the raw amino-acid sequence, 384 residues long: 8-amino-7-oxononanoate synthase (384 aa).

Substrate is bound at residue Arg-21. Pyridoxal 5'-phosphate is bound at residue 108–109 (GF). His-133 lines the substrate pocket. Pyridoxal 5'-phosphate-binding residues include Ser-179, His-207, and Thr-233. Lys-236 carries the N6-(pyridoxal phosphate)lysine modification. Thr-352 is a substrate binding site.

Belongs to the class-II pyridoxal-phosphate-dependent aminotransferase family. BioF subfamily. As to quaternary structure, homodimer. Pyridoxal 5'-phosphate serves as cofactor.

The catalysed reaction is 6-carboxyhexanoyl-[ACP] + L-alanine + H(+) = (8S)-8-amino-7-oxononanoate + holo-[ACP] + CO2. It participates in cofactor biosynthesis; biotin biosynthesis. In terms of biological role, catalyzes the decarboxylative condensation of pimeloyl-[acyl-carrier protein] and L-alanine to produce 8-amino-7-oxononanoate (AON), [acyl-carrier protein], and carbon dioxide. This Escherichia coli O17:K52:H18 (strain UMN026 / ExPEC) protein is 8-amino-7-oxononanoate synthase.